Here is a 292-residue protein sequence, read N- to C-terminus: Glycine--tRNA ligase alpha subunit (292 aa).

This sequence belongs to the class-II aminoacyl-tRNA synthetase family. In terms of assembly, tetramer of two alpha and two beta subunits.

It localises to the cytoplasm. The enzyme catalyses tRNA(Gly) + glycine + ATP = glycyl-tRNA(Gly) + AMP + diphosphate. This Synechococcus elongatus (strain ATCC 33912 / PCC 7942 / FACHB-805) (Anacystis nidulans R2) protein is Glycine--tRNA ligase alpha subunit.